Reading from the N-terminus, the 488-residue chain is 6-phosphogluconate dehydrogenase, decarboxylating (488 aa).

NADP(+)-binding positions include 9–14 (GLAVMG), 32–34 (NRT), 74–76 (VKA), and Asn-102. Residues Asn-102 and 128–130 (SGG) contribute to the substrate site. Lys-183 (proton acceptor) is an active-site residue. A substrate-binding site is contributed by 186-187 (HN). Glu-190 serves as the catalytic Proton donor. Substrate-binding residues include Tyr-191, Lys-260, Arg-287, Arg-451, and His-457.

The protein belongs to the 6-phosphogluconate dehydrogenase family. In terms of assembly, homodimer.

It carries out the reaction 6-phospho-D-gluconate + NADP(+) = D-ribulose 5-phosphate + CO2 + NADPH. Its pathway is carbohydrate degradation; pentose phosphate pathway; D-ribulose 5-phosphate from D-glucose 6-phosphate (oxidative stage): step 3/3. Functionally, catalyzes the oxidative decarboxylation of 6-phosphogluconate to ribulose 5-phosphate and CO(2), with concomitant reduction of NADP to NADPH. This is 6-phosphogluconate dehydrogenase, decarboxylating (gnd) from Treponema pallidum (strain Nichols).